Reading from the N-terminus, the 393-residue chain is Bifunctional enzyme IspD/IspF (393 aa).

The 2-C-methyl-D-erythritol 4-phosphate cytidylyltransferase stretch occupies residues Met-1–Ile-234. Residues Arg-235 to Ala-393 are 2-C-methyl-D-erythritol 2,4-cyclodiphosphate synthase. A divalent metal cation-binding residues include Asp-241 and His-243. 4-CDP-2-C-methyl-D-erythritol 2-phosphate-binding positions include Asp-241–His-243 and His-267–Ser-268. His-275 lines the a divalent metal cation pocket. 4-CDP-2-C-methyl-D-erythritol 2-phosphate-binding positions include Asp-289–Gly-291, Thr-365–Glu-368, Phe-372, and Arg-375.

It in the N-terminal section; belongs to the IspD/TarI cytidylyltransferase family. IspD subfamily. In the C-terminal section; belongs to the IspF family. Requires a divalent metal cation as cofactor.

It catalyses the reaction 2-C-methyl-D-erythritol 4-phosphate + CTP + H(+) = 4-CDP-2-C-methyl-D-erythritol + diphosphate. The enzyme catalyses 4-CDP-2-C-methyl-D-erythritol 2-phosphate = 2-C-methyl-D-erythritol 2,4-cyclic diphosphate + CMP. It participates in isoprenoid biosynthesis; isopentenyl diphosphate biosynthesis via DXP pathway; isopentenyl diphosphate from 1-deoxy-D-xylulose 5-phosphate: step 2/6. It functions in the pathway isoprenoid biosynthesis; isopentenyl diphosphate biosynthesis via DXP pathway; isopentenyl diphosphate from 1-deoxy-D-xylulose 5-phosphate: step 4/6. Functionally, bifunctional enzyme that catalyzes the formation of 4-diphosphocytidyl-2-C-methyl-D-erythritol from CTP and 2-C-methyl-D-erythritol 4-phosphate (MEP) (IspD), and catalyzes the conversion of 4-diphosphocytidyl-2-C-methyl-D-erythritol 2-phosphate (CDP-ME2P) to 2-C-methyl-D-erythritol 2,4-cyclodiphosphate (ME-CPP) with a corresponding release of cytidine 5-monophosphate (CMP) (IspF). The chain is Bifunctional enzyme IspD/IspF from Bradyrhizobium sp. (strain BTAi1 / ATCC BAA-1182).